Consider the following 333-residue polypeptide: Anthranilate phosphoribosyltransferase (333 aa).

5-phospho-alpha-D-ribose 1-diphosphate-binding positions include Gly80, 83–84 (GD), Thr88, 90–93 (NLST), 108–116 (KHGNRSASG), and Ser120. Residue Gly80 coordinates anthranilate. Mg(2+) is bound at residue Ser92. Anthranilate is bound at residue Asn111. Anthranilate is bound at residue Arg166. Mg(2+) contacts are provided by Asp224 and Glu225.

The protein belongs to the anthranilate phosphoribosyltransferase family. Homodimer. Mg(2+) serves as cofactor.

It catalyses the reaction N-(5-phospho-beta-D-ribosyl)anthranilate + diphosphate = 5-phospho-alpha-D-ribose 1-diphosphate + anthranilate. Its pathway is amino-acid biosynthesis; L-tryptophan biosynthesis; L-tryptophan from chorismate: step 2/5. Its function is as follows. Catalyzes the transfer of the phosphoribosyl group of 5-phosphorylribose-1-pyrophosphate (PRPP) to anthranilate to yield N-(5'-phosphoribosyl)-anthranilate (PRA). This Pyrobaculum arsenaticum (strain DSM 13514 / JCM 11321 / PZ6) protein is Anthranilate phosphoribosyltransferase.